Reading from the N-terminus, the 565-residue chain is Wee1-like protein kinase 2 (565 aa).

2 disordered regions span residues 18–78 and 169–191; these read YCEE…KSPE and KSNG…GNVE. Residues 19–29 are compositionally biased toward acidic residues; the sequence is CEEESESEGQE. Basic and acidic residues predominate over residues 31–51; sequence WETRDAHSQIPDRAEGQESEA. Position 76 is a phosphoserine (Ser76). Residues 173-175 carry the Nuclear localization signal motif; that stretch reads KRK. Residues 214 to 492 enclose the Protein kinase domain; that stretch reads FLEVEKIGVG…ARSRVLRPSL (279 aa). ATP-binding positions include 220 to 228 and Lys243; that span reads IGVGEFGTV. Residues 317-331 carry the Nuclear export signal motif; the sequence is KLKDILLQISLGLKY. Asp341 functions as the Proton acceptor in the catalytic mechanism. Mg(2+) is bound by residues Asn346 and Asp382. Positions 495–521 form a coiled coil; that stretch reads AEELQQQLNLEKFKTATLERELREAQQ. Residues 521–565 are disordered; it reads QAWFSQEERGDAGVSGTPTGSRSTKRLVGGKSAKSSSFTWGKSSP. Residues 553–565 show a composition bias toward polar residues; it reads AKSSSFTWGKSSP.

This sequence belongs to the protein kinase superfamily. Ser/Thr protein kinase family. WEE1 subfamily. Post-translationally, phosphorylation leads to increase its activity.

It is found in the nucleus. The enzyme catalyses L-tyrosyl-[protein] + ATP = O-phospho-L-tyrosyl-[protein] + ADP + H(+). Functionally, oocyte-specific protein tyrosine kinase that phosphorylates and inhibits CDK1 and acts as a key regulator of meiosis during both prophase I and metaphase II. Required to maintain meiotic arrest in oocytes during the germinal vesicle (GV) stage, a long period of quiescence at dictyate prophase I, by phosphorylating CDK1 at 'Tyr-15', leading to inhibit CDK1 activity and prevent meiotic reentry. Also required for metaphase II exit during egg activation by phosphorylating CDK1 at 'Tyr-15', to ensure exit from meiosis in oocytes and promote pronuclear formation. The sequence is that of Wee1-like protein kinase 2 (WEE2) from Ailuropoda melanoleuca (Giant panda).